A 193-amino-acid chain; its full sequence is Corrinoid adenosyltransferase (193 aa).

ATP is bound by residues 10-18 (TRTGDDGTT), Lys-28, 137-142 (RRAERS), and Asn-163.

Belongs to the Cob(I)alamin adenosyltransferase family.

The protein resides in the cytoplasm. It catalyses the reaction 2 cob(II)yrinate a,c diamide + reduced [electron-transfer flavoprotein] + 2 ATP = 2 adenosylcob(III)yrinate a,c-diamide + 2 triphosphate + oxidized [electron-transfer flavoprotein] + 3 H(+). The catalysed reaction is 2 cob(II)alamin + reduced [electron-transfer flavoprotein] + 2 ATP = 2 adenosylcob(III)alamin + 2 triphosphate + oxidized [electron-transfer flavoprotein] + 3 H(+). It functions in the pathway cofactor biosynthesis; adenosylcobalamin biosynthesis; adenosylcobalamin from cob(II)yrinate a,c-diamide: step 2/7. This is Corrinoid adenosyltransferase from Mycobacterium bovis (strain ATCC BAA-935 / AF2122/97).